The primary structure comprises 370 residues: sn-glycerol-3-phosphate import ATP-binding protein UgpC (370 aa).

An ABC transporter domain is found at 4 to 236; sequence LSLKNIAKRY…PATAFVAAFM (233 aa). 38–45 is a binding site for ATP; that stretch reads GPSGCGKS.

The protein belongs to the ABC transporter superfamily. sn-glycerol-3-phosphate importer (TC 3.A.1.1.3) family. As to quaternary structure, the complex is composed of two ATP-binding proteins (UgpC), two transmembrane proteins (UgpA and UgpE) and a solute-binding protein (UgpB).

It is found in the cell inner membrane. It carries out the reaction sn-glycerol 3-phosphate(out) + ATP + H2O = sn-glycerol 3-phosphate(in) + ADP + phosphate + H(+). Functionally, part of the ABC transporter complex UgpBAEC involved in sn-glycerol-3-phosphate (G3P) import. Responsible for energy coupling to the transport system. The sequence is that of sn-glycerol-3-phosphate import ATP-binding protein UgpC from Chromobacterium violaceum (strain ATCC 12472 / DSM 30191 / JCM 1249 / CCUG 213 / NBRC 12614 / NCIMB 9131 / NCTC 9757 / MK).